Reading from the N-terminus, the 2057-residue chain is Myosin heavy chain, non-muscle (2057 aa).

One can recognise a Myosin N-terminal SH3-like domain in the interval 78–128; it reads HRSVLVWVPHENQGFVAASIKREHGDEVEVELAETGKRVMILRDDIQKMNP. The Myosin motor domain occupies 132 to 867; the sequence is DKVEDMAELT…VLAHLEEERD (736 aa). 225-232 provides a ligand contact to ATP; that stretch reads GESGAGKT. A 25 kDa/50 kDa junction region spans residues 250-260; sequence PKGSGAVPHPA. The 50 kDa/20 kDa junction stretch occupies residues 722–734; sequence DTQFGARTRKGMF. Residues 745–767 form an actin-binding region; it reads LAKLMDTLRNTNPNFVRCIIPNH. The reactive sulfhydryl/actin-binding stretch occupies residues 782 to 798; it reads QLRCNGVLEGIRICRQG. The 30-residue stretch at 870 to 899 folds into the IQ domain; sequence ISDLIVNFQAFCRGFLARRNYQKRLQQLNA. Residues 926 to 2016 adopt a coiled-coil conformation; sequence KPLLEVTKQE…SLKTKLRRTG (1091 aa). 3 disordered regions span residues 1124 to 1144, 1782 to 1802, and 2008 to 2057; these read EERL…KRKI, SSER…EEIA, and LKTK…DSAN. The interval 1343–2010 is alpha-helical tailpiece (LMM); sequence SQIAELQVKL…MNREINSLKT (668 aa). Residues 1343–2057 form a light meromyosin (LMM) region; sequence SQIAELQVKL…ESLDGEDSAN (715 aa). Over residues 1782–1792 the composition is skewed to basic and acidic residues; sequence SSERARRAAET. The segment at 2011–2057 is globular tailpiece; sequence KLRRTGGIGLSSSRLTGTPSSKRAGGGGGSDDSSVQDESLDGEDSAN. 2 positions are modified to phosphoserine: Ser-2021 and Ser-2022. Residues 2044–2057 show a composition bias toward acidic residues; the sequence is SVQDESLDGEDSAN.

This sequence belongs to the TRAFAC class myosin-kinesin ATPase superfamily. Myosin family. As to quaternary structure, interacts with sau. Interacts with ck and Ubr3. Ubiquitinated. As to expression, in Johnston's organ, expressed in neurons and scolopale cells.

The protein resides in the cell projection. The protein localises to the cilium. It is found in the cytoplasm. Nonmuscle myosin appears to be responsible for cellularization. Required for morphogenesis and cytokinesis. Necessary for auditory transduction: plays a role in Johnston's organ organization by acting in scolopidial apical attachment. Interaction with the myosin ck may be important for this function. Localizes to and defines the trailing edge of cells during larval epidermal wound healing. This process is dependent on the phosphatidylinositol 4-phosphate 5-kinase sktl/skittles. The protein is Myosin heavy chain, non-muscle (zip) of Drosophila melanogaster (Fruit fly).